Here is a 122-residue protein sequence, read N- to C-terminus: UPF0102 protein TTE1452 (122 aa).

This sequence belongs to the UPF0102 family.

In Caldanaerobacter subterraneus subsp. tengcongensis (strain DSM 15242 / JCM 11007 / NBRC 100824 / MB4) (Thermoanaerobacter tengcongensis), this protein is UPF0102 protein TTE1452.